Here is a 206-residue protein sequence, read N- to C-terminus: Inactive ribonuclease-like protein 9 (206 aa).

The N-terminal stretch at methionine 1 to phenylalanine 26 is a signal peptide. 3 disulfide bridges follow: cysteine 99-cysteine 154, cysteine 117-cysteine 169, and cysteine 124-cysteine 131. The N-linked (GlcNAc...) asparagine glycan is linked to asparagine 132.

This sequence belongs to the pancreatic ribonuclease family.

It localises to the secreted. Functionally, does not exhibit any ribonuclease activity. This chain is Inactive ribonuclease-like protein 9 (RNASE9), found in Saimiri boliviensis boliviensis (Bolivian squirrel monkey).